Consider the following 467-residue polypeptide: Methylenetetrahydrofolate--tRNA-(uracil-5-)-methyltransferase TrmFO (467 aa).

10–15 contributes to the FAD binding site; the sequence is GGGMAG.

Belongs to the MnmG family. TrmFO subfamily. Requires FAD as cofactor.

It localises to the cytoplasm. It carries out the reaction uridine(54) in tRNA + (6R)-5,10-methylene-5,6,7,8-tetrahydrofolate + NADH + H(+) = 5-methyluridine(54) in tRNA + (6S)-5,6,7,8-tetrahydrofolate + NAD(+). The enzyme catalyses uridine(54) in tRNA + (6R)-5,10-methylene-5,6,7,8-tetrahydrofolate + NADPH + H(+) = 5-methyluridine(54) in tRNA + (6S)-5,6,7,8-tetrahydrofolate + NADP(+). Functionally, catalyzes the folate-dependent formation of 5-methyl-uridine at position 54 (M-5-U54) in all tRNAs. This Hyphomonas neptunium (strain ATCC 15444) protein is Methylenetetrahydrofolate--tRNA-(uracil-5-)-methyltransferase TrmFO.